The following is a 123-amino-acid chain: Large ribosomal subunit protein uL14 (123 aa).

It belongs to the universal ribosomal protein uL14 family. As to quaternary structure, part of the 50S ribosomal subunit. Forms a cluster with proteins L3 and L19. In the 70S ribosome, L14 and L19 interact and together make contacts with the 16S rRNA in bridges B5 and B8.

In terms of biological role, binds to 23S rRNA. Forms part of two intersubunit bridges in the 70S ribosome. This chain is Large ribosomal subunit protein uL14, found in Photobacterium profundum (strain SS9).